A 565-amino-acid chain; its full sequence is Proline--tRNA ligase (565 aa).

Belongs to the class-II aminoacyl-tRNA synthetase family. ProS type 1 subfamily. Homodimer.

Its subcellular location is the cytoplasm. The enzyme catalyses tRNA(Pro) + L-proline + ATP = L-prolyl-tRNA(Pro) + AMP + diphosphate. Functionally, catalyzes the attachment of proline to tRNA(Pro) in a two-step reaction: proline is first activated by ATP to form Pro-AMP and then transferred to the acceptor end of tRNA(Pro). As ProRS can inadvertently accommodate and process non-cognate amino acids such as alanine and cysteine, to avoid such errors it has two additional distinct editing activities against alanine. One activity is designated as 'pretransfer' editing and involves the tRNA(Pro)-independent hydrolysis of activated Ala-AMP. The other activity is designated 'posttransfer' editing and involves deacylation of mischarged Ala-tRNA(Pro). The misacylated Cys-tRNA(Pro) is not edited by ProRS. The polypeptide is Proline--tRNA ligase (Campylobacter lari (strain RM2100 / D67 / ATCC BAA-1060)).